The primary structure comprises 570 residues: Protein FAM227A (570 aa).

The span at 87–99 (LREKTRSSPEDKV) shows a compositional bias: basic and acidic residues. Disordered regions lie at residues 87–112 (LREK…CKGS), 336–374 (PAQS…QNTA), and 519–570 (KAAD…TSKP). Phosphotyrosine is present on tyrosine 343. Residues 345-362 (PQSSSANSPSEKTSSAKQ) are compositionally biased toward polar residues. Phosphoserine occurs at positions 348 and 349. 2 stretches are compositionally biased toward basic and acidic residues: residues 363–374 (NSEKSLRMQNTA) and 540–562 (SPDK…EVEH).

The protein belongs to the FAM227 family.

In Homo sapiens (Human), this protein is Protein FAM227A (FAM227A).